A 376-amino-acid polypeptide reads, in one-letter code: Chaperone protein DnaJ (376 aa).

Residues 5–70 (DYYEILGVSK…QKRAAYDQYG (66 aa)) form the J domain. Residues 131–209 (GVTKEIRIPT…CHGHGRVERS (79 aa)) form a CR-type zinc finger. Cysteine 144, cysteine 147, cysteine 161, cysteine 164, cysteine 183, cysteine 186, cysteine 197, and cysteine 200 together coordinate Zn(2+). CXXCXGXG motif repeat units follow at residues 144–151 (CDVCHGSG), 161–168 (CPTCHGSG), 183–190 (CPHCQGRG), and 197–204 (CNKCHGHG).

Belongs to the DnaJ family. Homodimer. The cofactor is Zn(2+).

The protein resides in the cytoplasm. In terms of biological role, participates actively in the response to hyperosmotic and heat shock by preventing the aggregation of stress-denatured proteins and by disaggregating proteins, also in an autonomous, DnaK-independent fashion. Unfolded proteins bind initially to DnaJ; upon interaction with the DnaJ-bound protein, DnaK hydrolyzes its bound ATP, resulting in the formation of a stable complex. GrpE releases ADP from DnaK; ATP binding to DnaK triggers the release of the substrate protein, thus completing the reaction cycle. Several rounds of ATP-dependent interactions between DnaJ, DnaK and GrpE are required for fully efficient folding. Also involved, together with DnaK and GrpE, in the DNA replication of plasmids through activation of initiation proteins. The sequence is that of Chaperone protein DnaJ from Escherichia fergusonii (strain ATCC 35469 / DSM 13698 / CCUG 18766 / IAM 14443 / JCM 21226 / LMG 7866 / NBRC 102419 / NCTC 12128 / CDC 0568-73).